Consider the following 95-residue polypeptide: Aspartyl/glutamyl-tRNA(Asn/Gln) amidotransferase subunit C (95 aa).

Belongs to the GatC family. As to quaternary structure, heterotrimer of A, B and C subunits.

The catalysed reaction is L-glutamyl-tRNA(Gln) + L-glutamine + ATP + H2O = L-glutaminyl-tRNA(Gln) + L-glutamate + ADP + phosphate + H(+). It catalyses the reaction L-aspartyl-tRNA(Asn) + L-glutamine + ATP + H2O = L-asparaginyl-tRNA(Asn) + L-glutamate + ADP + phosphate + 2 H(+). In terms of biological role, allows the formation of correctly charged Asn-tRNA(Asn) or Gln-tRNA(Gln) through the transamidation of misacylated Asp-tRNA(Asn) or Glu-tRNA(Gln) in organisms which lack either or both of asparaginyl-tRNA or glutaminyl-tRNA synthetases. The reaction takes place in the presence of glutamine and ATP through an activated phospho-Asp-tRNA(Asn) or phospho-Glu-tRNA(Gln). The polypeptide is Aspartyl/glutamyl-tRNA(Asn/Gln) amidotransferase subunit C (Dehalococcoides mccartyi (strain ATCC BAA-2100 / JCM 16839 / KCTC 5957 / BAV1)).